The following is a 433-amino-acid chain: 2,2-dialkylglycine decarboxylase (433 aa).

Lys272 carries the post-translational modification N6-(pyridoxal phosphate)lysine.

It belongs to the class-III pyridoxal-phosphate-dependent aminotransferase family. Homotetramer. Pyridoxal 5'-phosphate is required as a cofactor.

It carries out the reaction 2,2-dialkylglycine + pyruvate + H(+) = dialkyl ketone + L-alanine + CO2. In terms of biological role, the dialkylglycine decarboxylase is of interest because it normally catalyzes both decarboxylation and amino transfer. It may be more properly described as a decarboxylating aminotransferase rather than an aminotransferring decarboxylase. In Burkholderia cepacia (Pseudomonas cepacia), this protein is 2,2-dialkylglycine decarboxylase (dgdA).